Consider the following 421-residue polypeptide: 3-isopropylmalate dehydratase large subunit (421 aa).

Residues Cys-292, Cys-352, and Cys-355 each contribute to the [4Fe-4S] cluster site.

Belongs to the aconitase/IPM isomerase family. LeuC type 2 subfamily. Heterodimer of LeuC and LeuD. Requires [4Fe-4S] cluster as cofactor.

The catalysed reaction is (2R,3S)-3-isopropylmalate = (2S)-2-isopropylmalate. The protein operates within amino-acid biosynthesis; L-leucine biosynthesis; L-leucine from 3-methyl-2-oxobutanoate: step 2/4. Its function is as follows. Catalyzes the isomerization between 2-isopropylmalate and 3-isopropylmalate, via the formation of 2-isopropylmaleate. This is 3-isopropylmalate dehydratase large subunit from Herpetosiphon aurantiacus (strain ATCC 23779 / DSM 785 / 114-95).